An 81-amino-acid chain; its full sequence is EC protein III (81 aa).

The protein belongs to the metallothionein superfamily. Type 15 family.

In terms of biological role, binds 5 molecules of zinc. May have a role in Zn(2+) homeostasis during embryogenesis. This chain is EC protein III, found in Triticum aestivum (Wheat).